The primary structure comprises 136 residues: Ribonuclease P protein component (136 aa).

Residues 39–59 (LPDVSSSKPARDTGAEQTSAP) are disordered.

This sequence belongs to the RnpA family. As to quaternary structure, consists of a catalytic RNA component (M1 or rnpB) and a protein subunit.

The catalysed reaction is Endonucleolytic cleavage of RNA, removing 5'-extranucleotides from tRNA precursor.. Functionally, RNaseP catalyzes the removal of the 5'-leader sequence from pre-tRNA to produce the mature 5'-terminus. It can also cleave other RNA substrates such as 4.5S RNA. The protein component plays an auxiliary but essential role in vivo by binding to the 5'-leader sequence and broadening the substrate specificity of the ribozyme. This Salinispora tropica (strain ATCC BAA-916 / DSM 44818 / JCM 13857 / NBRC 105044 / CNB-440) protein is Ribonuclease P protein component.